A 1402-amino-acid polypeptide reads, in one-letter code: DNA-directed RNA polymerase subunit beta' (1402 aa).

Cys-73, Cys-75, Cys-88, and Cys-91 together coordinate Zn(2+). Positions 464, 466, and 468 each coordinate Mg(2+). Zn(2+)-binding residues include Cys-812, Cys-886, Cys-893, and Cys-896.

The protein belongs to the RNA polymerase beta' chain family. As to quaternary structure, the RNAP catalytic core consists of 2 alpha, 1 beta, 1 beta' and 1 omega subunit. When a sigma factor is associated with the core the holoenzyme is formed, which can initiate transcription. The cofactor is Mg(2+). Requires Zn(2+) as cofactor.

It carries out the reaction RNA(n) + a ribonucleoside 5'-triphosphate = RNA(n+1) + diphosphate. In terms of biological role, DNA-dependent RNA polymerase catalyzes the transcription of DNA into RNA using the four ribonucleoside triphosphates as substrates. This is DNA-directed RNA polymerase subunit beta' from Rhodopseudomonas palustris (strain ATCC BAA-98 / CGA009).